Consider the following 229-residue polypeptide: 7-cyano-7-deazaguanine synthase (229 aa).

Residue 14–24 (LSGGQDSTTCL) coordinates ATP. The Zn(2+) site is built by Cys-192, Cys-200, Cys-203, and Cys-206.

The protein belongs to the QueC family. The cofactor is Zn(2+).

It carries out the reaction 7-carboxy-7-deazaguanine + NH4(+) + ATP = 7-cyano-7-deazaguanine + ADP + phosphate + H2O + H(+). Its pathway is purine metabolism; 7-cyano-7-deazaguanine biosynthesis. In terms of biological role, catalyzes the ATP-dependent conversion of 7-carboxy-7-deazaguanine (CDG) to 7-cyano-7-deazaguanine (preQ(0)). This chain is 7-cyano-7-deazaguanine synthase, found in Laribacter hongkongensis (strain HLHK9).